Here is a 354-residue protein sequence, read N- to C-terminus: Membrane progestin receptor beta (354 aa).

The Cytoplasmic portion of the chain corresponds to 1–75; that stretch reads MTTAILQRLS…FFSLFQKHNE (75 aa). The chain crosses the membrane as a helical span at residues 76-96; the sequence is VVNVWTHLLAALAVLLRFWAF. Residues 97-111 lie on the Extracellular side of the membrane; the sequence is VETEGLPWTSAHTLP. A helical membrane pass occupies residues 112-132; the sequence is LLLYVLSSITYLTFSLLAHLL. Residues 133–174 are Cytoplasmic-facing; that stretch reads QSKSELSHYTFYFVDYVGVSVYQYGSALVHFFYASDQAWYER. Residues 175-195 traverse the membrane as a helical segment; sequence FWLFFLPAAAFCGWLSCTGCC. At 196–213 the chain is on the extracellular side; that stretch reads YAKYRYRRPYPVMRKVCQ. A helical transmembrane segment spans residues 214–234; the sequence is VVPAGLAFILDISPVAHRVAL. The Cytoplasmic portion of the chain corresponds to 235–243; sequence CHLSGCQEQ. Residues 244–264 form a helical membrane-spanning segment; that stretch reads AAWYHTLQIVFFLVSAYFFSC. Over 265 to 283 the chain is Extracellular; it reads PVPEKYFPGSCDIVGHGHQ. Residues 284-304 traverse the membrane as a helical segment; that stretch reads IFHAFLSICTLSQLEAILLDY. At 305 to 319 the chain is on the cytoplasmic side; that stretch reads KGRQEIFLHRHSPLS. A helical membrane pass occupies residues 320-340; the sequence is IYAACLSFFFLVACSGATAAL. Over 341-354 the chain is Extracellular; the sequence is LREKIKARLSKKDS.

It belongs to the ADIPOR family.

The protein localises to the cell membrane. Functionally, steroid membrane receptor. Binds progesterone. May be involved in oocyte maturation. In Sus scrofa (Pig), this protein is Membrane progestin receptor beta (PAQR8).